The following is a 389-amino-acid chain: MKLELTPRQRKILWATVRSYIATAEPVGSKTLAQSYNFGVSTATIRNDLATLEQVGLLFQPHTSAGRVPSDFGYRVYVNDLLTSANSGGIPHDAPQPDPHPALQQLMDQLGRELGDDLDSLLQRVAQLLAHLSGCIALITPPQGPVVAIHHVQLVSVAPGRVMVLVVTDSYQTHSALVSPPDWPSDSREDLEDELQLLSNFLTLKLRGKTFAELQDLSWLKLDEEFRTYGHWLQQLLRSVVQRCLQPSLGQVFSAGMAELMRQPEFSQARQVQAVMQLIEEGAKQLQGMIGLHFADGGDPQLAYLPPLPSSTEMDQESGQSARKTPVIIYIGSENPLESLHHCTVIASTYHRRSAPLGTVTLLGPTRMAYERSIAAVQAVASHLTRALA.

This sequence belongs to the HrcA family.

Its function is as follows. Negative regulator of class I heat shock genes (grpE-dnaK-dnaJ and groELS operons). Prevents heat-shock induction of these operons. In Synechococcus sp. (strain JA-2-3B'a(2-13)) (Cyanobacteria bacterium Yellowstone B-Prime), this protein is Heat-inducible transcription repressor HrcA.